A 286-amino-acid polypeptide reads, in one-letter code: Centromere protein P (286 aa).

Residues 1-73 (MDSETRELRA…RSEHSFLSKL (73 aa)) adopt a coiled-coil conformation. Residue Ser-38 is modified to Phosphoserine.

The protein belongs to the CENP-P/CTF19 family. As to quaternary structure, component of the CENPA-CAD complex, composed of CENPI, CENPK, CENPL, CENPO, CENPP, CENPQ, CENPR and CENPS. The CENPA-CAD complex interacts with the CENPA-NAC complex, at least composed of CENPA, CENPC, CENPH, CENPM, CENPN, CENPT and CENPU.

The protein localises to the nucleus. The protein resides in the chromosome. Its subcellular location is the centromere. Functionally, component of the CENPA-CAD (nucleosome distal) complex, a complex recruited to centromeres which is involved in assembly of kinetochore proteins, mitotic progression and chromosome segregation. May be involved in incorporation of newly synthesized CENPA into centromeres via its interaction with the CENPA-NAC complex. The polypeptide is Centromere protein P (Cenpp) (Mus musculus (Mouse)).